The following is a 426-amino-acid chain: Pannexin-1 (426 aa).

The Cytoplasmic segment spans residues 1 to 40; the sequence is MAIAHLATEYVFSDFLLKEPTEPKFKGLRLELAVDKMVTC. An S-nitrosocysteine modification is found at Cys40. A helical membrane pass occupies residues 41–61; it reads IAVGLPLLLISLAFAQEISIG. The Extracellular portion of the chain corresponds to 62-106; it reads TQISCFSPSSFSWRQAAFVDSYCWAAVQQKNSLQSESGNLPLWLH. Intrachain disulfides connect Cys66/Cys264 and Cys84/Cys245. Residues 107–127 traverse the membrane as a helical segment; the sequence is KFFPYILLLFAILLYLPALFW. Residues 128 to 216 are Cytoplasmic-facing; the sequence is RFAAAPHLCS…HLIMKYISCR (89 aa). At Tyr198 the chain carries Phosphotyrosine. Residues 217-237 form a helical membrane-spanning segment; the sequence is LVTFAVVLLACIYLSYYFSLS. Residues 238–277 are Extracellular-facing; that stretch reads SLSDEFLCSIKSGVLRNDSTIPDSFQCKLIAVGIFQLLSL. A glycan (N-linked (GlcNAc...) asparagine) is linked at Asn254. Residues 278 to 298 traverse the membrane as a helical segment; sequence INLLVYALLVPVVIYTLFVPF. The Cytoplasmic segment spans residues 299 to 426; it reads RQKTDVLKVY…SRQRLLNSSC (128 aa). Cys346 carries the post-translational modification S-nitrosocysteine. The disordered stretch occupies residues 407–426; that stretch reads ETAANNGEKNSRQRLLNSSC.

The protein belongs to the pannexin family. Homoheptameric. S-nitrosylation inhibits channel currents and ATP release. In terms of processing, N-glycosylation plays a role in cell surface targeting. Glycosylation at its extracellular surface makes unlikely that two oligomers could dock to form an intercellular channel such as in gap junctions. Exists in three glycosylation states: non-glycosylated (GLY0), high-mannose glycosylated (GLY1), and fully mature glycosylated (GLY2). Post-translationally, cleaved by CASP3 and CASP7 during apoptosis. Cleavage opens the channel for the release of metabolites and induces plasma membrane permeability during apoptosis. Phosphorylated at Tyr-198 by SRC. Phosphorylation activates ATP release. Constitutively phosphorylated in vascular smooth muscle cells. In terms of tissue distribution, expressed in the eye, thyroid, prostate, kidney and liver. Abundantly expressed in the CNS, including hippocampus, olfactory bulb, cortex, cerebellum and white matter.

It is found in the cell membrane. It localises to the endoplasmic reticulum membrane. The enzyme catalyses Ca(2+)(in) = Ca(2+)(out). It catalyses the reaction ATP(in) = ATP(out). It carries out the reaction K(+)(in) = K(+)(out). The catalysed reaction is chloride(in) = chloride(out). The enzyme catalyses iodide(out) = iodide(in). It catalyses the reaction Na(+)(in) = Na(+)(out). It carries out the reaction nitrate(in) = nitrate(out). The catalysed reaction is L-aspartate(out) = L-aspartate(in). The enzyme catalyses L-glutamate(out) = L-glutamate(in). It catalyses the reaction D-gluconate(in) = D-gluconate(out). It carries out the reaction spermidine(in) = spermidine(out). Ion channel involved in a variety of physiological functions such as blood pressure regulation, apoptotic cell clearance and oogenesis. Forms anion-selective channels with relatively low conductance and an order of permeabilities: nitrate&gt;iodide&gt;chlroride&gt;&gt;aspartate=glutamate=gluconate. Can release ATP upon activation through phosphorylation or cleavage at C-terminus. May play a role as a Ca(2+)-leak channel to regulate ER Ca(2+) homeostasis. In terms of biological role, during apoptosis, the C terminal tail is cleaved by caspases, which opens the main pore acting as a large-pore ATP efflux channel with a broad distribution, which allows the regulated release of molecules and ions smaller than 1 kDa, such as nucleotides ATP and UTP, and selective plasma membrane permeability to attract phagocytes that engulf the dying cells. The polypeptide is Pannexin-1 (Panx1) (Rattus norvegicus (Rat)).